The primary structure comprises 193 residues: Ion-translocating oxidoreductase complex subunit A (193 aa).

A run of 6 helical transmembrane segments spans residues 5–25 (ILLI…FLGL), 39–59 (IGMG…AYLV), 65–85 (IPLE…AVIV), 102–122 (LLGI…VALL), 134–154 (VLYG…FSAL), and 171–191 (SIAL…TGLV).

Belongs to the NqrDE/RnfAE family. In terms of assembly, the complex is composed of six subunits: RnfA, RnfB, RnfC, RnfD, RnfE and RnfG.

It localises to the cell inner membrane. Its function is as follows. Part of a membrane-bound complex that couples electron transfer with translocation of ions across the membrane. This Glaesserella parasuis serovar 5 (strain SH0165) (Haemophilus parasuis) protein is Ion-translocating oxidoreductase complex subunit A.